A 427-amino-acid chain; its full sequence is Phosphoribosylamine--glycine ligase (427 aa).

The 206-residue stretch at 107-312 (KDLCARFNIP…LLALVNAAVD (206 aa)) folds into the ATP-grasp domain. ATP is bound at residue 133-193 (IRQQGAPIVV…EEFLDGEEAS (61 aa)). Mg(2+)-binding residues include Glu282 and Asn284.

It belongs to the GARS family. Mg(2+) is required as a cofactor. It depends on Mn(2+) as a cofactor.

It carries out the reaction 5-phospho-beta-D-ribosylamine + glycine + ATP = N(1)-(5-phospho-beta-D-ribosyl)glycinamide + ADP + phosphate + H(+). It functions in the pathway purine metabolism; IMP biosynthesis via de novo pathway; N(1)-(5-phospho-D-ribosyl)glycinamide from 5-phospho-alpha-D-ribose 1-diphosphate: step 2/2. This chain is Phosphoribosylamine--glycine ligase, found in Brucella melitensis biotype 1 (strain ATCC 23456 / CCUG 17765 / NCTC 10094 / 16M).